The chain runs to 243 residues: UPF0246 protein SUB1767 (243 aa).

The protein belongs to the UPF0246 family.

This is UPF0246 protein SUB1767 from Streptococcus uberis (strain ATCC BAA-854 / 0140J).